The following is a 104-amino-acid chain: L-rhamnose mutarotase (104 aa).

Substrate is bound at residue Y18. H22 functions as the Proton donor in the catalytic mechanism. Substrate contacts are provided by residues Y41 and 76–77 (WW).

Belongs to the rhamnose mutarotase family. As to quaternary structure, homodimer.

It localises to the cytoplasm. The catalysed reaction is alpha-L-rhamnose = beta-L-rhamnose. The protein operates within carbohydrate metabolism; L-rhamnose metabolism. Its function is as follows. Involved in the anomeric conversion of L-rhamnose. This Klebsiella pneumoniae subsp. pneumoniae (strain ATCC 700721 / MGH 78578) protein is L-rhamnose mutarotase.